The chain runs to 440 residues: Glyceraldehyde-3-phosphate dehydrogenase, testis-specific (440 aa).

The segment at 1–105 (MSRRDVVLTN…PPPPPLQKPA (105 aa)) is testis-specific N-terminal extension. Pro residues-rich tracts occupy residues 40 to 75 (PPKLEDPPPTVEEQPPPPPPPPPPPPPPPPPPPPQI) and 83 to 102 (APPPPPPPPPPPPPPPPPLQ). Residues 40-106 (PPKLEDPPPT…PPPPLQKPAR (67 aa)) are disordered. NAD(+)-binding positions include 117–118 (RI), Asp-138, Lys-183, Tyr-205, and Thr-225. D-glyceraldehyde 3-phosphate contacts are provided by residues 255–257 (SCT), Thr-286, 315–316 (TG), and Arg-338. Residue Cys-256 is the Nucleophile of the active site. The residue at position 358 (Ser-358) is a Phosphoserine. Asn-420 serves as a coordination point for NAD(+).

It belongs to the glyceraldehyde-3-phosphate dehydrogenase family. As to quaternary structure, homotetramer. As to expression, testis specific.

The protein localises to the cytoplasm. It carries out the reaction D-glyceraldehyde 3-phosphate + phosphate + NAD(+) = (2R)-3-phospho-glyceroyl phosphate + NADH + H(+). Its pathway is carbohydrate degradation; glycolysis; pyruvate from D-glyceraldehyde 3-phosphate: step 1/5. Its function is as follows. May play an important role in regulating the switch between different pathways for energy production during spermiogenesis and in the spermatozoon. Required for sperm motility and male fertility. The polypeptide is Glyceraldehyde-3-phosphate dehydrogenase, testis-specific (Gapdhs) (Mus musculus (Mouse)).